The sequence spans 286 residues: Phosphoribosylaminoimidazole-succinocarboxamide synthase (286 aa).

This sequence belongs to the SAICAR synthetase family.

The enzyme catalyses 5-amino-1-(5-phospho-D-ribosyl)imidazole-4-carboxylate + L-aspartate + ATP = (2S)-2-[5-amino-1-(5-phospho-beta-D-ribosyl)imidazole-4-carboxamido]succinate + ADP + phosphate + 2 H(+). It participates in purine metabolism; IMP biosynthesis via de novo pathway; 5-amino-1-(5-phospho-D-ribosyl)imidazole-4-carboxamide from 5-amino-1-(5-phospho-D-ribosyl)imidazole-4-carboxylate: step 1/2. The chain is Phosphoribosylaminoimidazole-succinocarboxamide synthase from Mannheimia succiniciproducens (strain KCTC 0769BP / MBEL55E).